The primary structure comprises 155 residues: UPF0266 membrane protein lin0773 (155 aa).

3 helical membrane passes run 8–28 (IFLF…DAVI), 46–66 (RWDG…NTFF), and 70–90 (PFST…ICFF).

The protein belongs to the UPF0266 family.

It is found in the cell membrane. The protein is UPF0266 membrane protein lin0773 of Listeria innocua serovar 6a (strain ATCC BAA-680 / CLIP 11262).